A 1677-amino-acid chain; its full sequence is Vitellogenin (1677 aa).

An N-terminal signal peptide occupies residues 1–8 (LTIALVGS). Positions 17-655 (FSGSKTYQYK…NAASILPSAV (639 aa)) constitute a Vitellogenin domain. 2 disordered regions span residues 1089–1232 (TLRG…SEEI) and 1252–1280 (FQNK…SKQD). Residues 1098 to 1122 (SSSSSSSSSSSSSSSSSSSSSSQQS) show a composition bias toward low complexity. Basic and acidic residues predominate over residues 1123–1145 (RMEKRMEQDKLTENLERDRDHMR). Residues 1169–1196 (SSSSSSSSSSSGSNSSSSSSSSSSSSSR) are compositionally biased toward low complexity. N1182, N1202, N1217, and N1218 each carry an N-linked (GlcNAc...) asparagine glycan. Residues 1197-1212 (SHNHRNNTRTLSKSKR) are compositionally biased toward basic residues. 2 stretches are compositionally biased toward low complexity: residues 1215-1229 (NNNN…SSSS) and 1260-1273 (SSSS…SSQS). Residues 1490 to 1675 (SKCVAQENKF…TATEAASFCV (186 aa)) enclose the VWFD domain. Cystine bridges form between C1492–C1631 and C1515–C1674. Over residues 1636–1649 (GERRKEFRMPDGRQ) the composition is skewed to basic and acidic residues. A disordered region spans residues 1636–1659 (GERRKEFRMPDGRQARGPSVSPTP).

Phosvitin, an egg yolk storage protein, is one of the most highly phosphorylated (10%) proteins in nature. As to expression, found in liver, testis and undifferentiated gonads of estrogen-treated fish. Not detected in the brain and spleen.

Precursor of the major egg-yolk proteins that are sources of nutrients during early development of oviparous organisms. The chain is Vitellogenin from Acipenser transmontanus (White sturgeon).